Reading from the N-terminus, the 141-residue chain is Putative antiporter subunit mnhB2 (141 aa).

4 helical membrane passes run 10 to 30 (TVTK…FFAG), 35 to 55 (GGGF…FLAF), 70 to 90 (KLMI…VFFG), and 116 to 136 (LFEL…MLAL).

Belongs to the CPA3 antiporters (TC 2.A.63) subunit B family. May form a heterooligomeric complex that consists of seven subunits: mnhA2, mnhB2, mnhC2, mnhD2, mnhE2, mnhF2 and mnhG2.

Its subcellular location is the cell membrane. This is Putative antiporter subunit mnhB2 (mnhB2) from Staphylococcus haemolyticus (strain JCSC1435).